A 64-amino-acid polypeptide reads, in one-letter code: Conotoxin Pn-B01121 (64 aa).

Residues 1 to 22 form the signal peptide; the sequence is MCCLPVFVILLLLIASAPSVDA. Residues 23 to 48 constitute a propeptide that is removed on maturation; that stretch reads LPKTKDDMSLASFHDNAKRTLQILSN. Trp63 carries the post-translational modification Tryptophan amide.

Belongs to the conotoxin T superfamily. Post-translationally, contains 2 disulfide bonds that can be either 'C1-C3, C2-C4' or 'C1-C4, C2-C3', since these disulfide connectivities have been observed for conotoxins with cysteine framework V (for examples, see AC P0DQQ7 and AC P81755). In terms of tissue distribution, expressed by the venom duct.

The protein localises to the secreted. The polypeptide is Conotoxin Pn-B01121 (Conus pennaceus (Feathered cone)).